Consider the following 357-residue polypeptide: MKEYKVAVIPGDGIGVEIVGEALKVLEKVGAKYDTKFNFTEVKAGGCAIDEFGVPLPNETLEICKNSDAVLLGAVGGPKWDTLPGEKRPEKALMGLRGGLGLYANLRPAKVYDILKSASPLKEEIINKGVDLLVVRELTGGIYFGERGRDIQNGINSAYDTERYNVEEIKRIAHVAFKAALKRNKKVTSVDKANILESSRLWRETVTEVAKEYPEVELNYLYVDNAAMQLVREPSQFDVIVTSNIFGDILTDEASMVTGSIGMLPSASLRNDTFGMYEPIHGSAPDIAGQDLANPLAQILSVAMMLEYSFNMTEAARDVEDAVEKVLNSGYRTGDIYTEGSKKVGTKEMGKLVLAEL.

77–90 (GPKWDTLPGEKRPE) is a binding site for NAD(+). Substrate contacts are provided by R97, R107, R136, and D224. Residues D224, D248, and D252 each contribute to the Mg(2+) site. 282-294 (GSAPDIAGQDLAN) contacts NAD(+).

This sequence belongs to the isocitrate and isopropylmalate dehydrogenases family. LeuB type 1 subfamily. In terms of assembly, homodimer. Mg(2+) is required as a cofactor. Requires Mn(2+) as cofactor.

The protein localises to the cytoplasm. The catalysed reaction is (2R,3S)-3-isopropylmalate + NAD(+) = 4-methyl-2-oxopentanoate + CO2 + NADH. The protein operates within amino-acid biosynthesis; L-leucine biosynthesis; L-leucine from 3-methyl-2-oxobutanoate: step 3/4. Its function is as follows. Catalyzes the oxidation of 3-carboxy-2-hydroxy-4-methylpentanoate (3-isopropylmalate) to 3-carboxy-4-methyl-2-oxopentanoate. The product decarboxylates to 4-methyl-2 oxopentanoate. This is 3-isopropylmalate dehydrogenase from Clostridium acetobutylicum (strain ATCC 824 / DSM 792 / JCM 1419 / IAM 19013 / LMG 5710 / NBRC 13948 / NRRL B-527 / VKM B-1787 / 2291 / W).